A 100-amino-acid polypeptide reads, in one-letter code: Large ribosomal subunit protein bL21 (100 aa).

This sequence belongs to the bacterial ribosomal protein bL21 family. As to quaternary structure, part of the 50S ribosomal subunit. Contacts protein L20.

Functionally, this protein binds to 23S rRNA in the presence of protein L20. This chain is Large ribosomal subunit protein bL21, found in Corynebacterium jeikeium (strain K411).